The sequence spans 348 residues: Tetraacyldisaccharide 4'-kinase (348 aa).

ATP is bound at residue 50–57; sequence TMGGTGKT.

The protein belongs to the LpxK family.

The catalysed reaction is a lipid A disaccharide + ATP = a lipid IVA + ADP + H(+). Its pathway is glycolipid biosynthesis; lipid IV(A) biosynthesis; lipid IV(A) from (3R)-3-hydroxytetradecanoyl-[acyl-carrier-protein] and UDP-N-acetyl-alpha-D-glucosamine: step 6/6. Functionally, transfers the gamma-phosphate of ATP to the 4'-position of a tetraacyldisaccharide 1-phosphate intermediate (termed DS-1-P) to form tetraacyldisaccharide 1,4'-bis-phosphate (lipid IVA). This Desulfotalea psychrophila (strain LSv54 / DSM 12343) protein is Tetraacyldisaccharide 4'-kinase.